We begin with the raw amino-acid sequence, 263 residues long: uncharacterized protein (263 aa).

The N-terminal stretch at M1–G22 is a signal peptide. C23 carries N-palmitoyl cysteine lipidation. A lipid anchor (S-diacylglycerol cysteine) is attached at C23.

The protein belongs to the staphylococcal tandem lipoprotein family.

Its subcellular location is the cell membrane. This is an uncharacterized protein from Staphylococcus aureus (strain COL).